The sequence spans 159 residues: Eukaryotic translation initiation factor 5A-5 (159 aa).

The span at 1-12 shows a compositional bias: basic and acidic residues; the sequence is MSDEEHHFESKA. The disordered stretch occupies residues 1 to 23; that stretch reads MSDEEHHFESKADAGASKTYPQQ. A Hypusine modification is found at lysine 52.

This sequence belongs to the eIF-5A family. Lys-52 undergoes hypusination, a unique post-translational modification that consists in the addition of a butylamino group from spermidine to lysine side chain, leading to the formation of the unusual amino acid hypusine. eIF-5As are the only known proteins to undergo this modification, which is essential for their function.

Its function is as follows. Translation factor that promotes translation elongation and termination, particularly upon ribosome stalling at specific amino acid sequence contexts. Binds between the exit (E) and peptidyl (P) site of the ribosome and promotes rescue of stalled ribosome: specifically required for efficient translation of polyproline-containing peptides as well as other motifs that stall the ribosome. Acts as a ribosome quality control (RQC) cofactor by joining the RQC complex to facilitate peptidyl transfer during CAT tailing step. This chain is Eukaryotic translation initiation factor 5A-5 (EIF5A5), found in Solanum tuberosum (Potato).